Consider the following 115-residue polypeptide: Pro-neuregulin-4, membrane-bound isoform (115 aa).

The Extracellular portion of the chain corresponds to 1 to 62 (MPTDHEEPCG…SSIQTKSNLF (62 aa)). In terms of domain architecture, EGF-like spans 5–46 (HEEPCGPSHKSFCLNGGLCYVIPTIPSPFCRCVENYTGARCE). 3 disulfides stabilise this stretch: C9–C23, C17–C34, and C36–C45. Residue N39 is glycosylated (N-linked (GlcNAc...) asparagine). The chain crosses the membrane as a helical span at residues 63 to 83 (EAFVALAVLVTLIIGAFYFLC). The Cytoplasmic segment spans residues 84–115 (RKGHFQRASSVQYDINLVETSSTSAHHSHEQH).

This sequence belongs to the neuregulin family. Interacts with ERBB4. Post-translationally, proteolytic cleavage close to the plasma membrane on the external face leads to the release of the soluble growth factor form. Extensive glycosylation precedes the proteolytic cleavage.

Its subcellular location is the cell membrane. The protein localises to the secreted. Functionally, low affinity ligand for the ERBB4 tyrosine kinase receptor. Concomitantly recruits ERBB1 and ERBB2 coreceptors, resulting in ligand-stimulated tyrosine phosphorylation and activation of the ERBB receptors. Does not bind to the ERBB1, ERBB2 and ERBB3 receptors. This chain is Pro-neuregulin-4, membrane-bound isoform (NRG4), found in Homo sapiens (Human).